We begin with the raw amino-acid sequence, 210 residues long: 7-carboxy-7-deazaguanine synthase (210 aa).

Residues I25–G27 and R40 contribute to the substrate site. The Radical SAM core domain occupies H31–P210. Positions 44, 48, and 51 each coordinate [4Fe-4S] cluster. T84 serves as a coordination point for substrate. Residues G86 and S127–K129 contribute to the S-adenosyl-L-methionine site. P210 is a binding site for substrate.

Belongs to the radical SAM superfamily. 7-carboxy-7-deazaguanine synthase family. Homodimer. [4Fe-4S] cluster is required as a cofactor. The cofactor is S-adenosyl-L-methionine. Mg(2+) serves as cofactor.

The catalysed reaction is 6-carboxy-5,6,7,8-tetrahydropterin + H(+) = 7-carboxy-7-deazaguanine + NH4(+). It participates in purine metabolism; 7-cyano-7-deazaguanine biosynthesis. Catalyzes the complex heterocyclic radical-mediated conversion of 6-carboxy-5,6,7,8-tetrahydropterin (CPH4) to 7-carboxy-7-deazaguanine (CDG), a step common to the biosynthetic pathways of all 7-deazapurine-containing compounds. In Flavobacterium psychrophilum (strain ATCC 49511 / DSM 21280 / CIP 103535 / JIP02/86), this protein is 7-carboxy-7-deazaguanine synthase.